The primary structure comprises 264 residues: Undecaprenyl-diphosphatase (264 aa).

Transmembrane regions (helical) follow at residues 1–21 (MDLI…FLPI), 39–59 (QGLA…AVYF), 87–107 (WYLI…DDLI), 111–131 (LRST…LWVA), 144–164 (IALS…IPGT), 187–207 (FSFL…GLQL), 208–228 (VLSA…LSAV), and 244–264 (IGML…FIAV).

The protein belongs to the UppP family.

The protein resides in the cell inner membrane. It catalyses the reaction di-trans,octa-cis-undecaprenyl diphosphate + H2O = di-trans,octa-cis-undecaprenyl phosphate + phosphate + H(+). Functionally, catalyzes the dephosphorylation of undecaprenyl diphosphate (UPP). Confers resistance to bacitracin. The protein is Undecaprenyl-diphosphatase of Teredinibacter turnerae (strain ATCC 39867 / T7901).